Reading from the N-terminus, the 774-residue chain is MQTVIQNPNWWRRRNKLEKSLLVSLGIMFVVLATGFGLWIGKVLRTSPPSNPQATALHGDSTTINQVPTGTASKGKSGDSGDVCLTQECIHTASTVLRKMKPEVEPCDNFYEFACGTYLEEENIPDDKVSISTFSVISDKLQEQLKDIITAERPETEPKHFRLPNLLYKACMNKTLIETLGPEPITRVAERLGGWPLIKGDSWNADDSWTWQEQVKKFRTAGFSMDYIIDFSIGVDLQNSTKRLIDLDQSSLALSREYLVKGFNETLVTAYYKYMVDIAVLFGANRDLAKTELLLSLEFEMALANISWPNEKRRNSSELYNLRTPAQLQAAYPYVQWVDYMNALLPEGLNVAEDEMINLSVPSFFEDLGKLLAKTPKRVIANYMFWRIHGFSVGFLSEEFRKRQLQYATALSGRQEQEARWKECVDIATSSMDEVCEDDFDSLGISVGSLYVGKHFHKDSKANALEMVNEIRNVFNDILDEVNWMDAKTKKEAKLKLHSMATHIGYPDEMLDNEKLAAYYAKLDIDPDKYFESFLGMNIFGTDYSFNKLRLPVNKTDWVRHARPAIVNAFYSSLENSIQFPAGILQGHFFNAQRPKYMNFGAIGYVIGHEITHGFDDQGRQFDVKGNLRDWWHPDTQKAYLAKAKCIIEQYGNYTERATGLNLNGINTQGENIADNGGVKESYIAYRRWAEKHGPEAKLPGLDYTPEQMFWVAAGQTWCAKYRKESLKMRITTGVHSPSEFRVLGSLSNMKDFAKDFHCPEGSPMNPVQKCEVW.

Residues 1–20 (MQTVIQNPNWWRRRNKLEKS) are Cytoplasmic-facing. Residues 21–41 (LLVSLGIMFVVLATGFGLWIG) form a helical; Signal-anchor for type II membrane protein membrane-spanning segment. Topologically, residues 42 to 774 (KVLRTSPPSN…MNPVQKCEVW (733 aa)) are extracellular. Positions 50–79 (SNPQATALHGDSTTINQVPTGTASKGKSGD) are disordered. Over residues 60 to 74 (DSTTINQVPTGTASK) the composition is skewed to polar residues. One can recognise a Peptidase M13 domain in the interval 83 to 774 (VCLTQECIHT…MNPVQKCEVW (692 aa)). Intrachain disulfides connect Cys-84–Cys-89, Cys-107–Cys-759, Cys-115–Cys-719, Cys-171–Cys-424, and Cys-646–Cys-771. Residues Asn-173, Asn-239, Asn-264, Asn-305, Asn-315, Asn-358, and Asn-554 are each glycosylated (N-linked (GlcNAc...) asparagine). His-609 serves as a coordination point for Zn(2+). Residue Glu-610 is part of the active site. His-613 contributes to the Zn(2+) binding site. The N-linked (GlcNAc...) asparagine glycan is linked to Asn-653. Glu-671 contacts Zn(2+). Catalysis depends on Asp-675, which acts as the Proton donor.

This sequence belongs to the peptidase M13 family. The cofactor is Zn(2+). In terms of processing, N-glycosylated. The soluble form is probably produced by proteolytic cleavage. Detected in the stellate cells in the main segment and the bar-shaped cells in the initial segment of male and female Malpighian tubules (at protein level). Expressed in the spermatheca (at protein level). Expressed in the somatic cyst cells of the testes, with increased expression at the tail end of elongating cysts. Expressed in the ovaries with strong expression in the posterior polar cells and in border cells of stage 8, 9, and 10 follicles. In adults and third-instar larvae, expressed in the brain, ventral ganglion, and stellate cells. Also expressed in the foregut and the imaginal disks (eye, antennal and leg) of third-instar larvae. In stage 17 embryos, expressed in the tracheal system, foregut, hindgut and epidermis. Also expressed in the stellate cell progenitors of the caudal visceral mesoderm in embryos.

It is found in the cell membrane. Its subcellular location is the secreted. It catalyses the reaction Preferential cleavage of polypeptides between hydrophobic residues, particularly with Phe or Tyr at P1'.. In terms of biological role, metalloendoprotease which cleaves peptides such as tachykinin peptide TK-2 at the amino side of hydrophobic residues. Functions in female fertility, embryogenesis and memory formation. Required in females for normal patterns of egg laying, probably due to its function in sperm retention and preventing sperm displacement by rival ejaculates. Also required for normal patterns of hatching due to its important role in early embryonic development. Required in the dorsal paired medial neurons for the proper formation of middle-term memory. Also required in the mushroom body neurons where it functions redundantly with neprilysins Nep3 and Nep4 in normal long-term memory formation. In Drosophila melanogaster (Fruit fly), this protein is Neprilysin-2.